The chain runs to 101 residues: Large ribosomal subunit protein uL23 (101 aa).

Belongs to the universal ribosomal protein uL23 family. In terms of assembly, part of the 50S ribosomal subunit. Contacts protein L29, and trigger factor when it is bound to the ribosome.

One of the early assembly proteins it binds 23S rRNA. One of the proteins that surrounds the polypeptide exit tunnel on the outside of the ribosome. Forms the main docking site for trigger factor binding to the ribosome. This chain is Large ribosomal subunit protein uL23, found in Wigglesworthia glossinidia brevipalpis.